Here is a 342-residue protein sequence, read N- to C-terminus: Outer spore wall protein RRT8 (342 aa).

Over 1–109 (MKAGIELISH…VLTNPVYWKH (109 aa)) the chain is Cytoplasmic. A helical membrane pass occupies residues 110–130 (ILLFAVCYALIFVTIAGLFYV). Position 131 (threonine 131) is a topological domain, extracellular. Residues 132–152 (LVPLLVTWAILLLGPLGVILV) form a helical membrane-spanning segment. Over 153–240 (HIQWILQTNV…PRLLFRMFFK (88 aa)) the chain is Cytoplasmic. Residues 241 to 261 (VSNFTSLTLLSLIPIVGPILA) form a helical membrane-spanning segment. At 262–299 (NQLMAPKRTFTYLQRYFLLKGFSKKQAKDFQYEHYASF) the chain is on the extracellular side. Residues 300-320 (ICFGMSAGLLELIPFFTIVTI) form a helical membrane-spanning segment. The Cytoplasmic segment spans residues 321-342 (SSNTVGAAKWCTSLLKGERKKE).

It belongs to the LDS family.

The protein resides in the prospore membrane. The protein localises to the lipid droplet. Its subcellular location is the spore wall. Its function is as follows. Involved in spore wall assembly. May be involved in the modulation of rDNA transcription. In Saccharomyces cerevisiae (strain ATCC 204508 / S288c) (Baker's yeast), this protein is Outer spore wall protein RRT8.